The chain runs to 484 residues: 6-phosphogluconate dehydrogenase, decarboxylating (484 aa).

NADP(+) is bound by residues 11–16, 34–36, 76–78, and asparagine 104; these read GLAVMG, NRT, and VRA. Substrate is bound by residues asparagine 104 and 130 to 132; that span reads SGG. Lysine 185 functions as the Proton acceptor in the catalytic mechanism. Substrate is bound at residue 188–189; the sequence is HN. Glutamate 192 acts as the Proton donor in catalysis. Residues tyrosine 193, lysine 262, arginine 289, arginine 447, and histidine 453 each coordinate substrate.

The protein belongs to the 6-phosphogluconate dehydrogenase family. In terms of assembly, homodimer.

It catalyses the reaction 6-phospho-D-gluconate + NADP(+) = D-ribulose 5-phosphate + CO2 + NADPH. The protein operates within carbohydrate degradation; pentose phosphate pathway; D-ribulose 5-phosphate from D-glucose 6-phosphate (oxidative stage): step 3/3. Catalyzes the oxidative decarboxylation of 6-phosphogluconate to ribulose 5-phosphate and CO(2), with concomitant reduction of NADP to NADPH. The protein is 6-phosphogluconate dehydrogenase, decarboxylating (gnd) of Haemophilus influenzae (strain ATCC 51907 / DSM 11121 / KW20 / Rd).